The following is a 478-amino-acid chain: Calcium/calmodulin-dependent protein kinase type II subunit alpha (478 aa).

Tyr13 is modified (phosphotyrosine). The 259-residue stretch at 13 to 271 folds into the Protein kinase domain; the sequence is YQLFEELGKG…AAEALKHPWI (259 aa). ATP contacts are provided by residues 19 to 27 and Lys42; that span reads LGKGAFSVV. Catalysis depends on Asp135, which acts as the Proton acceptor. Ser257 is modified (phosphoserine). Thr286 carries the phosphothreonine; by autocatalysis modification. Residues 290 to 300 form a calmodulin-binding region; that stretch reads LKKFNARRKLK. Residues 310-320 are interaction with BAALC; it reads TRNFSGGKSGG. Residues 314-341 form a disordered region; sequence SGGKSGGNKKSDGVKESSESTNTTIEDE. A compositionally biased stretch (basic and acidic residues) spans 322–331; sequence KKSDGVKESS. Phosphoserine is present on residues Ser330, Ser331, and Ser333. Phosphothreonine occurs at positions 336 and 337. The residue at position 404 (Ser404) is a Phosphoserine.

This sequence belongs to the protein kinase superfamily. CAMK Ser/Thr protein kinase family. CaMK subfamily. There are 4 genes encoding calcium/calmodulin-dependent protein kinase type II chains: CAMK2A, CAMK2B, CAMK2G and CAMK2D. The corresponding proteins assemble into homo- or heteromultimeric holoenzymes composed of 12 subunits with two hexameric rings stacked one on top of the other. Interacts with BAALC. Interacts with MPDZ. Interacts with SYN1. Interacts with CAMK2N2. Interacts with SYNGAP1. Interacts with SYNPO2. Interacts with SHANK3. Interacts with GRIN2B. Interacts with CACNB2. Interacts with LRRC7. Interacts with GRM5. Interacts with DAGLA (via C-terminal); this interaction is enhanced by autophosphorylation of CAMK2A at Thr-286. Interacts with CAMK2N1; this interaction requires CAMK2A activation by Ca(2+). Mg(2+) serves as cofactor. Autophosphorylation of Thr-286 following activation by Ca(2+)/calmodulin. Phosphorylation of Thr-286 locks the kinase into an activated state. In terms of processing, palmitoylated. Probably palmitoylated by ZDHHC3 and ZDHHC7.

Its subcellular location is the synapse. It is found in the postsynaptic density. The protein resides in the cell projection. The protein localises to the dendritic spine. It localises to the dendrite. The catalysed reaction is L-seryl-[protein] + ATP = O-phospho-L-seryl-[protein] + ADP + H(+). It carries out the reaction L-threonyl-[protein] + ATP = O-phospho-L-threonyl-[protein] + ADP + H(+). Activated by Ca(2+)/calmodulin. Binding of calmodulin results in conformational change that relieves intrasteric autoinhibition and allows autophosphorylation of Thr-286 which turns the kinase in a constitutively active form and confers to the kinase a Ca(2+)-independent activity. Its function is as follows. Calcium/calmodulin-dependent protein kinase that functions autonomously after Ca(2+)/calmodulin-binding and autophosphorylation, and is involved in various processes, such as synaptic plasticity, neurotransmitter release and long-term potentiation. Member of the NMDAR signaling complex in excitatory synapses, it regulates NMDAR-dependent potentiation of the AMPAR and therefore excitatory synaptic transmission. Regulates dendritic spine development. Also regulates the migration of developing neurons. Phosphorylates the transcription factor FOXO3 to activate its transcriptional activity. Phosphorylates the transcription factor ETS1 in response to calcium signaling, thereby decreasing ETS1 affinity for DNA. In response to interferon-gamma (IFN-gamma) stimulation, catalyzes phosphorylation of STAT1, stimulating the JAK-STAT signaling pathway. In response to interferon-beta (IFN-beta) stimulation, stimulates the JAK-STAT signaling pathway. Acts as a negative regulator of 2-arachidonoylglycerol (2-AG)-mediated synaptic signaling via modulation of DAGLA activity. In Pongo abelii (Sumatran orangutan), this protein is Calcium/calmodulin-dependent protein kinase type II subunit alpha (CAMK2A).